A 569-amino-acid chain; its full sequence is Probable protein phosphatase 2C BIPP2C1 (569 aa).

Disordered regions lie at residues 120–214 and 251–279; these read EVSP…KVTG and SLDD…GSSI. Basic and acidic residues predominate over residues 179–188; the sequence is ESERGSDADG. Positions 329–564 constitute a PPM-type phosphatase domain; the sequence is AAMLPHPSKV…DDVTVVVSVV (236 aa). Mn(2+) is bound by residues aspartate 358, glycine 359, aspartate 488, and aspartate 555.

Belongs to the PP2C family. Requires Mg(2+) as cofactor. The cofactor is Mn(2+).

It carries out the reaction O-phospho-L-seryl-[protein] + H2O = L-seryl-[protein] + phosphate. The catalysed reaction is O-phospho-L-threonyl-[protein] + H2O = L-threonyl-[protein] + phosphate. In terms of biological role, may play a role in responses to biotic and abiotic stresses. This is Probable protein phosphatase 2C BIPP2C1 (BIPP2C1) from Oryza sativa subsp. japonica (Rice).